We begin with the raw amino-acid sequence, 535 residues long: CTP synthase (535 aa).

Residues 1–267 (MTKFIFVTGG…DDIVIKKLGL (267 aa)) form an amidoligase domain region. Residue serine 13 participates in CTP binding. Residue serine 13 coordinates UTP. 14-19 (SLGKGI) serves as a coordination point for ATP. Residue tyrosine 54 participates in L-glutamine binding. An ATP-binding site is contributed by aspartate 71. Residues aspartate 71 and glutamate 141 each contribute to the Mg(2+) site. Residues 148–150 (DIE), 188–193 (KTKPTQ), and lysine 224 contribute to the CTP site. Residues 188–193 (KTKPTQ) and lysine 224 each bind UTP. The Glutamine amidotransferase type-1 domain maps to 292-534 (TIGIVGKYVS…IGASLKTNKL (243 aa)). An L-glutamine-binding site is contributed by glycine 354. The active-site Nucleophile; for glutamine hydrolysis is cysteine 381. L-glutamine-binding positions include 382-385 (LGMQ), glutamate 405, and arginine 462. Residues histidine 507 and glutamate 509 contribute to the active site.

The protein belongs to the CTP synthase family. Homotetramer.

The catalysed reaction is UTP + L-glutamine + ATP + H2O = CTP + L-glutamate + ADP + phosphate + 2 H(+). It catalyses the reaction L-glutamine + H2O = L-glutamate + NH4(+). The enzyme catalyses UTP + NH4(+) + ATP = CTP + ADP + phosphate + 2 H(+). It participates in pyrimidine metabolism; CTP biosynthesis via de novo pathway; CTP from UDP: step 2/2. With respect to regulation, allosterically activated by GTP, when glutamine is the substrate; GTP has no effect on the reaction when ammonia is the substrate. The allosteric effector GTP functions by stabilizing the protein conformation that binds the tetrahedral intermediate(s) formed during glutamine hydrolysis. Inhibited by the product CTP, via allosteric rather than competitive inhibition. Its function is as follows. Catalyzes the ATP-dependent amination of UTP to CTP with either L-glutamine or ammonia as the source of nitrogen. Regulates intracellular CTP levels through interactions with the four ribonucleotide triphosphates. This Carboxydothermus hydrogenoformans (strain ATCC BAA-161 / DSM 6008 / Z-2901) protein is CTP synthase.